The chain runs to 157 residues: MSKSCGNNLAAISVGISLLLLLVVCGIGCVWHWKHRVATRFTLPRFLQRRSSRRKVCTKTFLGPRIIGLRHEISVETQDHKSAVRGNNTHDNYENVEAGPPKAKGKTDKELYENTGQSNFEEHIYGNETSSDYYNFQKPRPSEVPQDEDIYILPDSY.

The chain crosses the membrane as a helical span at residues Ala-11 to Trp-31. The segment at Gln-78 to Asp-108 is disordered.

It belongs to the GAPT family. As to quaternary structure, interacts with GRB2. In terms of tissue distribution, highly expressed in spleen and PBL, detected at lower levels in thymus, and undetectable in all other tissues tested. Also expressed in various B-cell lines, monocytic cell line THP-1 and NK-like cell line YT, but not in T-cell line Jurkat or HeLa cells.

The protein localises to the cell membrane. Its function is as follows. Negatively regulates B-cell proliferation following stimulation through the B-cell receptor. May play an important role in maintenance of marginal zone (MZ) B-cells. The sequence is that of Protein GAPT (GAPT) from Homo sapiens (Human).